Here is a 230-residue protein sequence, read N- to C-terminus: MERRRGTVPLGWVFFVLCLSASSSCAVDLGSKSSNSTCRLNVTELASIHPGETWTLHGMCISICYYENVTEDEIIGVAFTWQHNESVVDLWLYQNDTVIRNFSDITTNILQDGLKMRTVPVTKLYTSRMVTNLTVGRYDCLRCENGTTKIIERLYVRLGSLYPRPPGSGLAKHPSVSADEELSATLARDIVLVSAITLFFFLLALRIPQRLCQRLRIRLPHRYQRLRTED.

The N-terminal stretch at 1–26 (MERRRGTVPLGWVFFVLCLSASSSCA) is a signal peptide. The Extracellular portion of the chain corresponds to 27–184 (VDLGSKSSNS…SVSADEELSA (158 aa)). Asparagine 35, asparagine 41, asparagine 68, asparagine 84, asparagine 95, asparagine 101, asparagine 132, and asparagine 145 each carry an N-linked (GlcNAc...) asparagine; by host glycan. The helical transmembrane segment at 185-205 (TLARDIVLVSAITLFFFLLAL) threads the bilayer. At 206 to 230 (RIPQRLCQRLRIRLPHRYQRLRTED) the chain is on the cytoplasmic side.

This sequence belongs to the HHV-5 UL16 protein family. Interacts with host ULBP1, ULBP2 and MICB.

The protein localises to the host membrane. Plays a role in escape from host immune response. Blocks the interaction between the host KLRK1 receptor with the ligands ULBP1 and ULBP2. ULBPs activate multiple signaling pathways in primary NK cells, resulting in the production of cytokines and chemokines. The sequestration of diverse KLRK1 ligands in the endoplasmic reticulum and cis-Golgi apparatus of cells by UL16 inhibits the activation of NK cells. The protein is Protein UL16 (UL16) of Human cytomegalovirus (strain AD169) (HHV-5).